Here is a 206-residue protein sequence, read N- to C-terminus: MAIKHLPKILIARKNKAEVNHCDLKRRVSIKIIYGLGNPGSAFVKSRHSLGKLMVSMYADSMAFPKNWPSTKENLTLVLSTSYMNDSGKQLKKISNDFVRKVSPLDKIVYVVVHDELELDLGKVKLRLPGGSHRGHNGIRSCQEFLGKESFYRIGLGIGRCESRNREDVSDYVLSKFNSNEMKLIETDIFHKFCNILQQLQLSIET.

The active-site Proton acceptor is His48. 3 residues coordinate tRNA: Tyr83, Asn85, and Asn137.

This sequence belongs to the PTH family.

The protein resides in the mitochondrion. It catalyses the reaction an N-acyl-L-alpha-aminoacyl-tRNA + H2O = an N-acyl-L-amino acid + a tRNA + H(+). Peptidyl-tRNA hydrolase involved in the recycling of tRNA-Lys from diacetyl-lysyl-tRNA-Lys and is important for mitochondrial function. This is Probable peptidyl-tRNA hydrolase (pth1) from Schizosaccharomyces pombe (strain 972 / ATCC 24843) (Fission yeast).